We begin with the raw amino-acid sequence, 882 residues long: MEPAPARSPRPQQDPARPQEPTMPPPETPSEGRQPSPSPSPTERAPASEEEFQFLRCQQCQAEAKCPKLLPCLHTLCSGCLEASGMQCPICQAPWPLGADTPALDNVFFESLQRRLSVYRQIVDAQAVCTRCKESADFWCFECEQLLCAKCFEAHQWFLKHEARPLAELRNQSVREFLDGTRKTNNIFCSNPNHRTPTLTSIYCRGCSKPLCCSCALLDSSHSELKCDISAEIQQRQEELDAMTQALQEQDSAFGAVHAQMHAAVGQLGRARAETEELIRERVRQVVAHVRAQERELLEAVDARYQRDYEEMASRLGRLDAVLQRIRTGSALVQRMKCYASDQEVLDMHGFLRQALCRLRQEEPQSLQAAVRTDGFDEFKVRLQDLSSCITQGKDAAVSKKASPEAASTPRDPIDVDLPEEAERVKAQVQALGLAEAQPMAVVQSVPGAHPVPVYAFSIKGPSYGEDVSNTTTAQKRKCSQTQCPRKVIKMESEEGKEARLARSSPEQPRPSTSKAVSPPHLDGPPSPRSPVIGSEVFLPNSNHVASGAGEAEERVVVISSSEDSDAENSSSRELDDSSSESSDLQLEGPSTLRVLDENLADPQAEDRPLVFFDLKIDNETQKISQLAAVNRESKFRVVIQPEAFFSIYSKAVSLEVGLQHFLSFLSSMRRPILACYKLWGPGLPNFFRALEDINRLWEFQEAISGFLAALPLIRERVPGASSFKLKNLAQTYLARNMSERSAMAAVLAMRDLCRLLEVSPGPQLAQHVYPFSSLQCFASLQPLVQAAVLPRAEARLLALHNVSFMELLSAHRRDRQGGLKKYSRYLSLQTTTLPPAQPAFNLQALGTYFEGLLEGPALARAEGVSTPLAGRGLAERASQQS.

The disordered stretch occupies residues 1–48; it reads MEPAPARSPRPQQDPARPQEPTMPPPETPSEGRQPSPSPSPTERAPAS. At serine 8 the chain carries Phosphoserine; by HIPK2. Residues serine 36 and serine 38 each carry the phosphoserine; by HIPK2 and MAPK1 modification. Serine 48 carries the phosphoserine modification. Zn(2+) is bound by residues cysteine 57 and cysteine 60. The RING-type zinc finger occupies 57–92; that stretch reads CQQCQAEAKCPKLLPCLHTLCSGCLEASGMQCPICQ. Residue lysine 65 forms a Glycyl lysine isopeptide (Lys-Gly) (interchain with G-Cter in SUMO1); alternate linkage. A Glycyl lysine isopeptide (Lys-Gly) (interchain with G-Cter in SUMO2); alternate cross-link involves residue lysine 65. Zn(2+) contacts are provided by cysteine 72, histidine 74, cysteine 77, cysteine 80, cysteine 88, and cysteine 91. Serine 117 bears the Phosphoserine; by CHEK2 mark. The B box-type 1; atypical zinc-finger motif lies at 124 to 166; sequence DAQAVCTRCKESADFWCFECEQLLCAKCFEAHQWFLKHEARPL. Zn(2+)-binding residues include cysteine 129, cysteine 132, cysteine 151, and histidine 155. A Glycyl lysine isopeptide (Lys-Gly) (interchain with G-Cter in SUMO1); alternate cross-link involves residue lysine 160. Lysine 160 participates in a covalent cross-link: Glycyl lysine isopeptide (Lys-Gly) (interchain with G-Cter in SUMO2); alternate. Residue lysine 160 forms a Glycyl lysine isopeptide (Lys-Gly) (interchain with G-Cter in SUMO1P1/SUMO5); alternate linkage. The B box-type 2 zinc-finger motif lies at 183–236; sequence KTNNIFCSNPNHRTPTLTSIYCRGCSKPLCCSCALLDSSHSELKCDISAEIQQR. Residues cysteine 189, histidine 194, cysteine 215, and histidine 222 each coordinate Zn(2+). The stretch at 228–253 forms a coiled coil; the sequence is DISAEIQQRQEELDAMTQALQEQDSA. A Glycyl lysine isopeptide (Lys-Gly) (interchain with G-Cter in SUMO2); alternate cross-link involves residue lysine 380. Residue lysine 380 forms a Glycyl lysine isopeptide (Lys-Gly) (interchain with G-Cter in /SUMO5); alternate linkage. A Glycyl lysine isopeptide (Lys-Gly) (interchain with G-Cter in ubiquitin); alternate cross-link involves residue lysine 380. Lysine 394 participates in a covalent cross-link: Glycyl lysine isopeptide (Lys-Gly) (interchain with G-Cter in SUMO2). A Glycyl lysine isopeptide (Lys-Gly) (interchain with G-Cter in SUMO1P1/SUMO5); alternate cross-link involves residue lysine 400. Residues lysine 400 and lysine 401 each participate in a glycyl lysine isopeptide (Lys-Gly) (interchain with G-Cter in ubiquitin); alternate cross-link. A Glycyl lysine isopeptide (Lys-Gly) (interchain with G-Cter in SUMO2); alternate cross-link involves residue lysine 401. A Phosphoserine; by MAPK1 and MAPK7 modification is found at serine 403. The interaction with PER2 stretch occupies residues 448 to 555; it reads GAHPVPVYAF…ASGAGEAEER (108 aa). Residue lysine 460 forms a Glycyl lysine isopeptide (Lys-Gly) (interchain with G-Cter in SUMO2) linkage. A disordered region spans residues 467 to 589; it reads DVSNTTTAQK…SESSDLQLEG (123 aa). Polar residues predominate over residues 468–484; sequence VSNTTTAQKRKCSQTQC. Lysine 476 is covalently cross-linked (Glycyl lysine isopeptide (Lys-Gly) (interchain with G-Cter in SUMO2); alternate). Residue lysine 476 forms a Glycyl lysine isopeptide (Lys-Gly) (interchain with G-Cter in ubiquitin); alternate linkage. Residues 476–490 carry the Nuclear localization signal motif; it reads KRKCSQTQCPRKVIK. A Glycyl lysine isopeptide (Lys-Gly) (interchain with G-Cter in SUMO2) cross-link involves residue lysine 478. Residues lysine 487 and lysine 490 each participate in a glycyl lysine isopeptide (Lys-Gly) (interchain with G-Cter in SUMO2); alternate cross-link. An N6-acetyllysine; alternate modification is found at lysine 487. The segment covering 489–501 has biased composition (basic and acidic residues); sequence IKMESEEGKEARL. A Glycyl lysine isopeptide (Lys-Gly) (interchain with G-Cter in SUMO1); alternate cross-link involves residue lysine 490. Lysine 490 participates in a covalent cross-link: Glycyl lysine isopeptide (Lys-Gly) (interchain with G-Cter in SUMO1P1/SUMO5); alternate. At serine 493 the chain carries Phosphoserine. Lysine 497 is covalently cross-linked (Glycyl lysine isopeptide (Lys-Gly) (interchain with G-Cter in SUMO1); alternate). Lysine 497 participates in a covalent cross-link: Glycyl lysine isopeptide (Lys-Gly) (interchain with G-Cter in SUMO2); alternate. A Glycyl lysine isopeptide (Lys-Gly) (interchain with G-Cter in SUMO1P1/SUMO5); alternate cross-link involves residue lysine 497. Position 504 is a phosphoserine (serine 504). At serine 505 the chain carries Phosphoserine; by MAPK1. Residues 505 to 516 are compositionally biased toward polar residues; it reads SPEQPRPSTSKA. The residue at position 512 (serine 512) is a Phosphoserine. Residue lysine 515 is modified to N6-acetyllysine. Phosphoserine occurs at positions 518, 527, and 530. At serine 518 the chain carries Phosphoserine; by CDK1 and CDK2. Serine 527 and serine 530 each carry phosphoserine; by MAPK1. Residues 556 to 562 are sumo interaction motif (SIM); it reads VVVISSS. A Phosphoserine modification is found at serine 565. Serine 565 is subject to Phosphoserine; by CK2. A Phosphothreonine modification is found at threonine 867.

In terms of assembly, key component of PML bodies. PML bodies are formed by the interaction of PML homodimers (via SUMO-binding motif) with sumoylated PML, leading to the assembly of higher oligomers. Several types of PML bodies have been observed. PML bodies can form hollow spheres that can sequester target proteins inside. Interacts (via SUMO-binding motif) with sumoylated proteins. Interacts (via C-terminus) with p53/TP53. Recruits p53/TP53 and CHEK2 into PML bodies, which promotes p53/TP53 phosphorylation at 'Ser-20' and prevents its proteasomal degradation. Interacts with MDM2, and sequesters MDM2 in the nucleolus, thereby preventing ubiquitination of p53/TP53. Interaction with PML-RARA oncoprotein and certain viral proteins causes disassembly of PML bodies and abolishes the normal PML function. Interacts with HIPK2, TERT, SIRT1, TOPBP1, TRIM27 and TRIM69. Interacts with ELF4 (via C-terminus). Interacts with ITPR3. Interacts (in the cytoplasm) with TGFBR1, TGFBR2 and PKM. Interacts (via the coiled-coil domain and when sumoylated) with SATB1. Interacts with UBE2I; the interaction is enhanced by arsenic binding. Interacts (PML-RARA oncoprotein, via the coiled-coil domain) with UBE2I; the interaction is enhanced by arsenic binding and is required for PML-RARA oncoprotein sumoylation and inhibition of RARA transactivational activity. Interacts with RB1, PPP1A, SMAD2, SMAD3, DAXX, RPL11 and MTOR. Interacts with PPARGC1A and KAT2A. Interacts with CSNK2A1 and CSNK2A3. Interacts with ANKRD2; the interaction is direct. Interacts (via SUMO-interacting motif) with sumoylated MORC3. Isoform PML-1, isoform PML-2, isoform PML-3, isoform PML-4, isoform PML-5 and isoform PML-6 interact with RNF4. Isoform PML-1 interacts with NLRP3. Isoform PML-1, isoform PML-2, isoform PML-3, isoform PML-4 and isoform PML-5 interact with MAGEA2, RBL2, PER2 and E2F4. Isoform PML-2 interacts with CIITA. Isoform PML-2, isoform PML-3 and isoform PML-4 interact with TBX2. Isoform PML-4 interacts with RANBP2, HDAC7, KAT6A, WRN, PIN1, TBX3 and phosphorylated MAPK1/ERK2. Isoform PML-4 interacts with the CTNNB1 and TCF7L2/TCF4 complex. Isoform PML-4 preferentially interacts with MAPK7/BMK1 although other isoforms (isoform PML-1, isoform PML-2, isoform PML-3 and isoform PML-6) also interact with it. Isoform PML-12 interacts with PIAS1, PIAS2 (isoform PIAS2-alpha) and CSNK2A1/CK2. Interacts with TRIM16. Interacts with PRDM1/Blimp-1. Interacts (via RING-type zinc finger) with EIF4E; the interaction results in conformational changes of both interacting proteins and reduces EIF4E affinity for the 5' m7G cap of mRNA, thus reducing EIF4E-mediated mRNA nuclear export. (Microbial infection) Interacts with Lassa virus Z protein and rabies virus phosphoprotein. As to quaternary structure, (Microbial infection) Isoform PML-1 interacts with herpes simplex virus-1/HHV-1 ICP0. In terms of assembly, (Microbial infection) Isoform PML-2 interacts with human adenovirus 2 E1A and this interaction stimulates E1A-dependent transcriptional activation. (Microbial infection) Isoform PML-4 interacts with VZV capsid protein VP26/ORF23 capsid protein. As to quaternary structure, (Microbial infection) The sumoylated isoform PML-4 interacts with encephalomyocarditis virus (EMCV) RNA-directed RNA polymerase 3D-POL (P3D-POL). In terms of assembly, (Microbial infection) Isoform PML-6 interacts with moloney murine leukemia virus (MoMLV) integrase (IN) and reverse transcriptase (RT). (Microbial infection) Isoform PML-4 and isoform PML-5 interact with human adenovirus 5 E1B-55K protein; these interactions promote efficient subnuclear targeting of E1B-55K to PML nuclear bodies. As to quaternary structure, (Microbial infection) Isoform PML-3 interacts (via RING-type zinc finger) with human foamy virus bel1/tas and bet. In terms of assembly, (Microbial infection) Interacts with human cytomegalovirus (HHV-5) immediate early protein IE1; this interaction mediates PML desumoylation and PML-mediated sumoylation of IE1. In terms of processing, ubiquitinated; mediated by RNF4, RNF111, UHRF1, UBE3A/E6AP, BCR(KLHL20) E3 ubiquitin ligase complex E3 ligase complex, SIAH1 or SIAH2 and leading to subsequent proteasomal degradation. Ubiquitination by BCR(KLHL20) E3 ubiquitin ligase complex E3 ligase complex requires CDK1/2-mediated phosphorylation at Ser-518 which in turn is recognized by prolyl-isopeptidase PIN1 and PIN1-catalyzed isomerization further potentiates PML interaction with KLHL20. 'Lys-6'-, 'Lys-11'-, 'Lys-48'- and 'Lys-63'-linked polyubiquitination by RNF4 is polysumoylation-dependent. Ubiquitination by RNF111 is polysumoylation-dependent. Post-translationally, sumoylation regulates PML's: stability in response to extracellular or intracellular stimuli, transcription directly and indirectly, through sequestration of or dissociation of the transcription factors from PML-NBs, ability to regulate apoptosis and its anti-viral activities. It is also essential for: maintaining proper PML nuclear bodies (PML-NBs) structure and normal function, recruitment of components of PML-NBs, the turnover and retention of PML in PML-NBs and the integrity of PML-NBs. Undergoes 'Lys-11'-linked sumoylation. Sumoylation on all three sites (Lys-65, Lys-160 and Lys-490) is required for nuclear body formation. Sumoylation on Lys-160 is a prerequisite for sumoylation on Lys-65. Lys-65 and Lys-160 are sumoylated by PISA1 and PIAS2. PIAS1-mediated sumoylation of PML promotes its interaction with CSNK2A1/CK2 and phosphorylation at Ser-565 which in turn triggers its ubiquitin-mediated degradation. PIAS1-mediated sumoylation of PML-RARA promotes its ubiquitin-mediated degradation. The PML-RARA fusion protein requires the coiled-coil domain for sumoylation. Sumoylation at Lys-490 by RANBP2 is essential for the proper assembly of PML-NBs. SUMO1P1/SUMO5 conjugated PML at Lys-160, Lys-380, Lys-400, Lys-490 and Lys-497, but Lys-380, Lys-400 and Lys-497 are not key acceptor lysines. SUMO1P1/SUMO5 forms polymeric chain on Lys-160 of PML by successive conjugation at 'Lys-18'; facilitating recruitment of PML-NB components, which enlarges PML. SUMO1P1/SUMO5 conjugation of PML increases SUMO2/3 conjugation, which leads to the recruitment of RNF4 and ubiquitin-dependent disintegration of PML-NBs. SUMO1P1/SUMO5 monoconjugated Lys-490. DNA damage triggers its sumoylation while some but not all viral infections can abolish sumoylation. Desumoylated by SENP1, SENP2, SENP3, SENP5 and SENP6. Arsenic induces PML and PML-RARA polysumoylation and their subsequent RNF4-dependent ubiquitination and proteasomal degradation, and is used as treatment in acute promyelocytic leukemia (APL). The nuclear isoforms (isoform PML-1, isoform PML-2, isoform PML-3, isoform PML-4, isoform PML-5 and isoform PML-6) show an increased sumoylation in response to arsenic trioxide. The cytoplasmic isoform PML-7 is not sumoylated. Phosphorylation is a major regulatory mechanism that controls PML protein abundance and the number and size of PML nuclear bodies (PML-NBs). Phosphorylated in response to DNA damage, probably by ATR. HIPK2-mediated phosphorylation at Ser-8, Ser-36 and Ser-38 leads to increased accumulation of PML protein and its sumoylation and is required for the maximal pro-apoptotic activity of PML after DNA damage. CHEK2-mediated phosphorylation at Ser-117 is important for PML-mediated apoptosis following DNA damage. MAPK1-mediated phosphorylations at Ser-403, Ser-505, Ser-527 and Ser-530 and CDK1/2-mediated phosphorylation at Ser-518 promote PIN1-dependent PML degradation. CK2-mediated phosphorylation at Ser-565 primes PML ubiquitination via an unidentified ubiquitin ligase. In terms of processing, (Microbial infection) Upon infection with Epstein-Barr virus, phosphorylated by CK2. Viral EBNA1 increases the association of CK2 with PML proteins, which increases PML phosphorylation by CK2, triggering the USP7-dependent polyubiquitylation and degradation of PML. Post-translationally, acetylation at Lys-487 is essential for its nuclear localization. Deacetylated at Lys-487 by SIRT1 and this deacetylation promotes PML control of PER2 nuclear localization. (Microbial infection) Immediate early protein IE1 of human cytomegalovirus (HHV-5) interferes with the sumoylation of PML. Immediate early protein IE1 inhibits PML de novo sumoylation. In terms of processing, (Microbial infection) Cleaved at two different sites by enterovirus 71 protease 3C, leading to impaired PML-Nuclear bodies formation.

The protein localises to the nucleus. It is found in the nucleoplasm. It localises to the cytoplasm. The protein resides in the PML body. Its subcellular location is the nucleolus. The protein localises to the endoplasmic reticulum membrane. It is found in the early endosome membrane. The protein operates within protein modification; protein sumoylation. Its function is as follows. Functions via its association with PML-nuclear bodies (PML-NBs) in a wide range of important cellular processes, including tumor suppression, transcriptional regulation, apoptosis, senescence, DNA damage response, and viral defense mechanisms. Acts as the scaffold of PML-NBs allowing other proteins to shuttle in and out, a process which is regulated by SUMO-mediated modifications and interactions. Inhibits EIF4E-mediated mRNA nuclear export by reducing EIF4E affinity for the 5' 7-methylguanosine (m7G) cap of target mRNAs. Isoform PML-4 has a multifaceted role in the regulation of apoptosis and growth suppression: activates RB1 and inhibits AKT1 via interactions with PP1 and PP2A phosphatases respectively, negatively affects the PI3K pathway by inhibiting MTOR and activating PTEN, and positively regulates p53/TP53 by acting at different levels (by promoting its acetylation and phosphorylation and by inhibiting its MDM2-dependent degradation). Isoform PML-4 also: acts as a transcriptional repressor of TBX2 during cellular senescence and the repression is dependent on a functional RBL2/E2F4 repressor complex, regulates double-strand break repair in gamma-irradiation-induced DNA damage responses via its interaction with WRN, acts as a negative regulator of telomerase by interacting with TERT, and regulates PER2 nuclear localization and circadian function. Isoform PML-6 inhibits specifically the activity of the tetrameric form of PKM. The nuclear isoforms (isoform PML-1, isoform PML-2, isoform PML-3, isoform PML-4 and isoform PML-5) in concert with SATB1 are involved in local chromatin-loop remodeling and gene expression regulation at the MHC-I locus. Isoform PML-2 is required for efficient IFN-gamma induced MHC II gene transcription via regulation of CIITA. Cytoplasmic PML is involved in the regulation of the TGF-beta signaling pathway. PML also regulates transcription activity of ELF4 and can act as an important mediator for TNF-alpha- and IFN-alpha-mediated inhibition of endothelial cell network formation and migration. Exhibits antiviral activity against both DNA and RNA viruses. The antiviral activity can involve one or several isoform(s) and can be enhanced by the permanent PML-NB-associated protein DAXX or by the recruitment of p53/TP53 within these structures. Isoform PML-4 restricts varicella zoster virus (VZV) via sequestration of virion capsids in PML-NBs thereby preventing their nuclear egress and inhibiting formation of infectious virus particles. The sumoylated isoform PML-4 restricts rabies virus by inhibiting viral mRNA and protein synthesis. The cytoplasmic isoform PML-14 can restrict herpes simplex virus-1 (HHV-1) replication by sequestering the viral E3 ubiquitin-protein ligase ICP0 in the cytoplasm. Isoform PML-6 shows restriction activity towards human cytomegalovirus (HHV-5) and influenza A virus strains PR8(H1N1) and ST364(H3N2). Sumoylated isoform PML-4 and isoform PML-12 show antiviral activity against encephalomyocarditis virus (EMCV) by promoting nuclear sequestration of viral polymerase (P3D-POL) within PML NBs. Isoform PML-3 exhibits antiviral activity against poliovirus by inducing apoptosis in infected cells through the recruitment and the activation of p53/TP53 in the PML-NBs. Isoform PML-3 represses human foamy virus (HFV) transcription by complexing the HFV transactivator, bel1/tas, preventing its binding to viral DNA. PML may positively regulate infectious hepatitis C viral (HCV) production and isoform PML-2 may enhance adenovirus transcription. Functions as an E3 SUMO-protein ligase that sumoylates (HHV-5) immediate early protein IE1, thereby participating in the antiviral response. Isoforms PML-3 and PML-6 display the highest levels of sumoylation activity. This is Protein PML (PML) from Homo sapiens (Human).